Here is a 196-residue protein sequence, read N- to C-terminus: uncharacterized protein (196 aa).

Residues 44-46 (TTA), Gly80, Val100, and 107-109 (PSL) each bind S-adenosyl-L-methionine.

The protein belongs to the class IV-like SAM-binding methyltransferase superfamily. RNA methyltransferase TrmH family.

This is an uncharacterized protein from Serratia marcescens.